The following is a 293-amino-acid chain: MLPKRAYPVQDSNVHSQEKKIIAGNWKMNINHSQAVSYLQELNWRLIDNGHDFDSCEIAVFPPFTDLRSVQTLVASDDIQISYGAQDVSAFSDGAHTGQISAQFLKDLDCKYVLIGHSEQRCLPCYPGNNSAINELNNKHDGLIANKLLRSFAAGICPILCIGDISPGDHFDATLSRFRSVLSHLKAISDKKHSIGYALGSKTHFLDSDQLHMLVAYEPSSAINSGNCANSGDIVRMAAAIKDIVNVRVLYGGGVNLFNASAVFNEDLLDGILVGRASLNASDFASLIKTCCL.

Residue 25 to 27 coordinates substrate; that stretch reads NWK. The Electrophile role is filled by His-117. Glu-218 acts as the Proton acceptor in catalysis.

Belongs to the triosephosphate isomerase family. As to quaternary structure, homodimer.

Its subcellular location is the cytoplasm. It carries out the reaction D-glyceraldehyde 3-phosphate = dihydroxyacetone phosphate. It participates in carbohydrate biosynthesis; gluconeogenesis. Its pathway is carbohydrate degradation; glycolysis; D-glyceraldehyde 3-phosphate from glycerone phosphate: step 1/1. Involved in the gluconeogenesis. Catalyzes stereospecifically the conversion of dihydroxyacetone phosphate (DHAP) to D-glyceraldehyde-3-phosphate (G3P). The protein is Triosephosphate isomerase of Tropheryma whipplei (strain Twist) (Whipple's bacillus).